Reading from the N-terminus, the 1390-residue chain is MAQQTFTGRKRVRKFFGHIREVAEMPNLIEVQKASYDQFLMVAEPPGGRDDEGLQAVFRSVFPISDFSNASMLEFVRYEFEPPKYDVDECRQRGMTYAAPLKVTLRLIVFDIDEETGARSVKDIKEQDVYMGDIPLMTMNGTFVVNGTERVIVSQMHRSPGVFFDHDKGKTHSSGKLLFAARVIPYRGSWLDIEFDAKDIVFARIDRRRKIPVTSLMFALGLDGEEILSTFYNKILYKRTKEGWRVPFDASRFRGYSTVNDLIDADTGKVVLEAGKKLTVRAARQLQEKGLKALRLSDSELVGNYLAEDLVNPKTGEIFAEAGDELTGKPIKGDDKEIELFVGATPMKAILEQGYKELPLLDIDHVNVGPYIRNTLSADKNMTREDALFDIYRVMRPGEPPTLDSAQNMFQSLFFDAERYDLSAVGRVKMNMRLDLDAPDTHRTLRKEDILAVIKTLVGLRDGKGEIDDIDHLGNRRVRSVGELMENQYRIGLLRMERAIKERMSSVDIDTVMPQDLINAKPAAAAVREFFGSSQLSQFMDQTNPLSEITHKRRLSALGPGGLTRERAGFEVRDVHPTHYGRICPIETPEGPNIGLINSLATFARVNKYGFVETPYRKVKEGRVTDEVVYLSAMEEGRYAVAQANISLDAKGRFTDDLIVCRAGGTRDVVLIPADQVDYMDVSPKQLVSVAAALIPFLENDDANRALMGSNMQRQAVPLVRAEAPFVGTGMEGVVARDSGAAIAARRTGVIDQIDATRIVIRATEDLDPTKSGVDIYRLMKYQRSNQSTCINQRPLVKVGDKVAKGDIIADGPSTDLGELALGRNVLVAFMPWNGYNFEDSILLSERIVKEDVFTSIHIEEFEVMARDTKLGPEEITRDIPNVSEEALKNLDEAGIVYIGAEVRAGDILVGKITPKGESPMTPEEKLLRAIFGEKASDVRDTSLRVPPGVQGTIVEVRVFNRHGVDKDERALAIEREEIERLAKDRDDEQAILDRNVYGRLADLLDNRQGVAGPKGFKKDTKITRAVLEEYPKSQWWLFASPNDKLMAEIEAMRKQYDESKKGLEQRFLDKVEKLQRGDELPPGVMKMVKVFVAVKRKIQPGDKMAGRHGNKGVVSKIVPIEDMPFLEDGTHADIVLNPLGVPSRMNVGQILETHLGWACAGMGKKIGQTIDAYYQRQDLKPLRETLKKIYGDDETIKSLDDGELIELGRNLSHGVPIATPVFDGAKEADIEEMLKLAGFDASGQSTVYDGRTGDEFDRKVTVGYIYMLKLHHLVDDKIHARSIGPYSLVTQQPLGGKAQFGGQRFGEMEVWALEAYGAAYTLQEMLTVKSDDVAGRTKVYEAIVRGDDTFEAGIPESFNVLVKEMRSLGLNVDLHNSKLGVPPPAEAAE.

The protein belongs to the RNA polymerase beta chain family. As to quaternary structure, the RNAP catalytic core consists of 2 alpha, 1 beta, 1 beta' and 1 omega subunit. When a sigma factor is associated with the core the holoenzyme is formed, which can initiate transcription.

The catalysed reaction is RNA(n) + a ribonucleoside 5'-triphosphate = RNA(n+1) + diphosphate. Its function is as follows. DNA-dependent RNA polymerase catalyzes the transcription of DNA into RNA using the four ribonucleoside triphosphates as substrates. The sequence is that of DNA-directed RNA polymerase subunit beta from Rhodopseudomonas palustris (strain HaA2).